We begin with the raw amino-acid sequence, 78 residues long: FXYD domain-containing ion transport regulator 7 (78 aa).

Residues 1-22 (MATQVPTKVPQDPDPFYYDYDT) lie on the Extracellular side of the membrane. Thr3 and Thr7 each carry an O-linked (GlcNAc) threonine glycan. A helical transmembrane segment spans residues 23-43 (VQTVGMTLATILFLLGILIIL). Topologically, residues 44–78 (SKKVKCRKADSRSESPTCKSCKSELPSSAPGGGGV) are cytoplasmic. A disordered region spans residues 52–78 (ADSRSESPTCKSCKSELPSSAPGGGGV). Ser71 bears the Phosphoserine mark.

This sequence belongs to the FXYD family. In terms of assembly, regulatory subunit of the sodium/potassium-transporting ATPase which is composed of a catalytic alpha subunit, a non-catalytic beta subunit and an additional regulatory subunit. The regulatory subunit, a member of the FXYD protein family, modulates the enzymatic activity in a tissue- and isoform-specific way by changing affinities of the Na+/K+-ATPase toward Na(+), K(+) or ATP. O-glycosylated; required for stabilization and translocation to the plasma membrane.

The protein resides in the cell membrane. Functionally, associates with and regulates the activity of the sodium/potassium-transporting ATPase (NKA) which catalyzes the hydrolysis of ATP coupled with the exchange of Na(+) and K(+) ions across the plasma membrane. Reduces the apparent affinity for external K(+), an effect that depends on the presence of external Na(+) and voltage. Increases the apparent affinity for intracellular Na(+). In Bos taurus (Bovine), this protein is FXYD domain-containing ion transport regulator 7 (FXYD7).